The chain runs to 89 residues: Small ribosomal subunit protein uS17 (89 aa).

This sequence belongs to the universal ribosomal protein uS17 family. As to quaternary structure, part of the 30S ribosomal subunit.

In terms of biological role, one of the primary rRNA binding proteins, it binds specifically to the 5'-end of 16S ribosomal RNA. The chain is Small ribosomal subunit protein uS17 from Ralstonia nicotianae (strain ATCC BAA-1114 / GMI1000) (Ralstonia solanacearum).